A 615-amino-acid polypeptide reads, in one-letter code: DNA mismatch repair protein MutL (615 aa).

Residues 363–397 (FAEPAAREPVAPRYTPAPASGSRPAAPWPNAQPGY) are disordered. Low complexity predominate over residues 364–391 (AEPAAREPVAPRYTPAPASGSRPAAPWP).

The protein belongs to the DNA mismatch repair MutL/HexB family.

Functionally, this protein is involved in the repair of mismatches in DNA. It is required for dam-dependent methyl-directed DNA mismatch repair. May act as a 'molecular matchmaker', a protein that promotes the formation of a stable complex between two or more DNA-binding proteins in an ATP-dependent manner without itself being part of a final effector complex. The polypeptide is DNA mismatch repair protein MutL (Escherichia coli O8 (strain IAI1)).